Reading from the N-terminus, the 924-residue chain is Lon protease homolog 3, mitochondrial (924 aa).

A mitochondrion-targeting transit peptide spans 1-63 (MMPKRFNTSG…PVQSLLLFRA (63 aa)). The Lon N-terminal domain maps to 112–325 (VIALPLPHKP…LTLELVKKQV (214 aa)). Residue 447 to 454 (GPPGVGKT) participates in ATP binding. Residues 738–922 (QTPVGVVMGL…EKIFDLAFNY (185 aa)) enclose the Lon proteolytic domain. Catalysis depends on residues Ser-828 and Lys-871.

This sequence belongs to the peptidase S16 family. As to quaternary structure, homohexamer or homoheptamer. Organized in a ring with a central cavity.

It localises to the mitochondrion matrix. It carries out the reaction Hydrolysis of proteins in presence of ATP.. Its function is as follows. ATP-dependent serine protease that mediates the selective degradation of misfolded, unassembled or oxidatively damaged polypeptides as well as certain short-lived regulatory proteins in the mitochondrial matrix. May also have a chaperone function in the assembly of inner membrane protein complexes. Participates in the regulation of mitochondrial gene expression and in the maintenance of the integrity of the mitochondrial genome. Binds to mitochondrial DNA in a site-specific manner. This chain is Lon protease homolog 3, mitochondrial (LON3), found in Arabidopsis thaliana (Mouse-ear cress).